A 300-amino-acid polypeptide reads, in one-letter code: Porphobilinogen deaminase (300 aa).

Cys239 bears the S-(dipyrrolylmethanemethyl)cysteine mark.

This sequence belongs to the HMBS family. In terms of assembly, monomer. It depends on dipyrromethane as a cofactor.

The enzyme catalyses 4 porphobilinogen + H2O = hydroxymethylbilane + 4 NH4(+). It functions in the pathway porphyrin-containing compound metabolism; protoporphyrin-IX biosynthesis; coproporphyrinogen-III from 5-aminolevulinate: step 2/4. Its function is as follows. Tetrapolymerization of the monopyrrole PBG into the hydroxymethylbilane pre-uroporphyrinogen in several discrete steps. The chain is Porphobilinogen deaminase from Francisella philomiragia subsp. philomiragia (strain ATCC 25017 / CCUG 19701 / FSC 153 / O#319-036).